Reading from the N-terminus, the 721-residue chain is Probable acyl-activating enzyme 17, peroxisomal (721 aa).

The Microbody targeting signal signature appears at 719–721; the sequence is SKL.

This sequence belongs to the ATP-dependent AMP-binding enzyme family. As to expression, expressed in leaves, stems and developing seeds.

It localises to the peroxisome. Its function is as follows. May act as an acid--thiol ligase that activates carboxylic acids by forming acyl-CoAs. In Arabidopsis thaliana (Mouse-ear cress), this protein is Probable acyl-activating enzyme 17, peroxisomal (AAE17).